Consider the following 97-residue polypeptide: Small ribosomal subunit protein bS18c (97 aa).

This sequence belongs to the bacterial ribosomal protein bS18 family. As to quaternary structure, part of the 30S ribosomal subunit.

Its subcellular location is the plastid. It is found in the chloroplast. This is Small ribosomal subunit protein bS18c from Oenothera glazioviana (Large-flowered evening primrose).